Consider the following 200-residue polypeptide: Serine/arginine-rich splicing factor RSZ23 (200 aa).

In terms of domain architecture, RRM spans 2–71; that stretch reads ARVYVGNLDP…NGWRVELSTK (70 aa). The CCHC-type zinc-finger motif lies at 86-103; that stretch reads MKCYECGEPGHFARECRL. The tract at residues 105 to 200 is disordered; sequence IGSGGLGSGR…REESPYANNA (96 aa). The segment covering 113–139 has biased composition (basic residues); the sequence is GRRRSRSRSRSPRYRGRSRSRSPRYRR.

Belongs to the splicing factor SR family. Post-translationally, extensively phosphorylated on serine residues in the RS domain. In terms of tissue distribution, expressed in roots, leaves and immature seeds.

Its subcellular location is the nucleus. In terms of biological role, involved in pre-mRNA splicing. In protoplast assay, enhances splicing efficiency of WAXY intron 1 and alters the selection of the 5'-splice sites by stimulating site 1 (proximal site). This Oryza sativa subsp. japonica (Rice) protein is Serine/arginine-rich splicing factor RSZ23 (RSZ23).